The primary structure comprises 678 residues: uncharacterized protein (678 aa).

2 disordered regions span residues Thr-123 to Val-156 and Thr-381 to Ser-417.

The protein localises to the cytoplasm. This is an uncharacterized protein from Schizosaccharomyces pombe (strain 972 / ATCC 24843) (Fission yeast).